Here is a 321-residue protein sequence, read N- to C-terminus: Lipoyl synthase (321 aa).

Cysteine 68, cysteine 73, cysteine 79, cysteine 94, cysteine 98, cysteine 101, and serine 308 together coordinate [4Fe-4S] cluster. Positions 80–297 (FNHGTATFMI…KAEALAMGFT (218 aa)) constitute a Radical SAM core domain.

It belongs to the radical SAM superfamily. Lipoyl synthase family. Requires [4Fe-4S] cluster as cofactor.

The protein localises to the cytoplasm. The catalysed reaction is [[Fe-S] cluster scaffold protein carrying a second [4Fe-4S](2+) cluster] + N(6)-octanoyl-L-lysyl-[protein] + 2 oxidized [2Fe-2S]-[ferredoxin] + 2 S-adenosyl-L-methionine + 4 H(+) = [[Fe-S] cluster scaffold protein] + N(6)-[(R)-dihydrolipoyl]-L-lysyl-[protein] + 4 Fe(3+) + 2 hydrogen sulfide + 2 5'-deoxyadenosine + 2 L-methionine + 2 reduced [2Fe-2S]-[ferredoxin]. The protein operates within protein modification; protein lipoylation via endogenous pathway; protein N(6)-(lipoyl)lysine from octanoyl-[acyl-carrier-protein]: step 2/2. Functionally, catalyzes the radical-mediated insertion of two sulfur atoms into the C-6 and C-8 positions of the octanoyl moiety bound to the lipoyl domains of lipoate-dependent enzymes, thereby converting the octanoylated domains into lipoylated derivatives. This chain is Lipoyl synthase, found in Escherichia coli O9:H4 (strain HS).